Reading from the N-terminus, the 203-residue chain is VPS4-associated protein 1 (203 aa).

Residues 99 to 109 (EKETNNSKDPD) show a composition bias toward basic and acidic residues. 2 disordered regions span residues 99-125 (EKETNNSKDPDPTTTDSTDTSPQAKND) and 171-193 (QVNRERYLKEQENYSNTDPEELL). The segment covering 110-120 (PTTTDSTDTSP) has biased composition (low complexity). Positions 121-157 (QAKNDAEILSETKKQYSKILDKVTELQRKNRKYELAK) form a coiled coil. Residues 171 to 182 (QVNRERYLKEQE) show a composition bias toward basic and acidic residues.

In terms of assembly, interacts with VPS4.

The protein resides in the cytoplasm. It localises to the endosome. Its function is as follows. VPS4-associated protein involved in trafficking to the vacuole. The protein is VPS4-associated protein 1 (VFA1) of Saccharomyces cerevisiae (strain ATCC 204508 / S288c) (Baker's yeast).